The primary structure comprises 210 residues: Putative cutinase (210 aa).

Basic and acidic residues predominate over residues 26–38 (DSERLPLKRDEPG). A disordered region spans residues 26–58 (DSERLPLKRDEPGSRSMRSTFIPSSQCSNLSSA). Residues 49–58 (SSQCSNLSSA) show a composition bias toward low complexity.

It catalyses the reaction cutin + H2O = cutin monomers.. This chain is Putative cutinase, found in Phytophthora capsici.